Consider the following 626-residue polypeptide: Janus kinase and microtubule-interacting protein 1 (626 aa).

Residues 1 to 22 are disordered; the sequence is MSKKGRSKGEKPEMETDAVQMA. Residues 1-365 are mediates association with microtubules; it reads MSKKGRSKGE…KIKNLTRENV (365 aa). 2 coiled-coil regions span residues 19–255 and 284–413; these read VQMA…EAER and ERDV…DDLS. Residues 365–626 are mediates interaction with TYK2 and GABBR1; that stretch reads VEMKEKLSAQ…ILFEPKLKFM (262 aa). Phosphoserine is present on serine 382. A compositionally biased stretch (polar residues) spans 452-461; it reads ETLSETSYNT. Positions 452–477 are disordered; sequence ETLSETSYNTDRTDRTPATPEEDLDD. Threonine 470 carries the post-translational modification Phosphothreonine. A coiled-coil region spans residues 490-604; the sequence is QLTREYQALQ…EFRVLELEVR (115 aa).

This sequence belongs to the JAKMIP family. Homodimer. Forms a complex with GABBR1 and KIF5B/kinesin-1. Interacts with JAK1 and TYK2. Predominantly expressed in neural tissues and lymphoid cells (at protein level). Isoform 2, isoform 3 and isoform 4 are specifically expressed in brain and retina. Isoform 1 and isoform 5 are also detected in liver, lung and skeletal muscle. Also detected in testis and to a lower extent spleen and intestine.

The protein resides in the cytoplasm. It is found in the cytoskeleton. Its subcellular location is the membrane. Associates with microtubules and may play a role in the microtubule-dependent transport of the GABA-B receptor. May play a role in JAK1 signaling and regulate microtubule cytoskeleton rearrangements. This chain is Janus kinase and microtubule-interacting protein 1 (JAKMIP1), found in Homo sapiens (Human).